Reading from the N-terminus, the 311-residue chain is Putative protease MJ0651 (311 aa).

Ser128 functions as the Nucleophile in the catalytic mechanism. The active-site Proton donor/acceptor is Lys180.

Belongs to the peptidase S49 family.

The chain is Putative protease MJ0651 from Methanocaldococcus jannaschii (strain ATCC 43067 / DSM 2661 / JAL-1 / JCM 10045 / NBRC 100440) (Methanococcus jannaschii).